Consider the following 515-residue polypeptide: 1-pyrroline-5-carboxylate dehydrogenase (515 aa).

Catalysis depends on residues Glu-286 and Cys-320.

Belongs to the aldehyde dehydrogenase family. RocA subfamily.

The catalysed reaction is L-glutamate 5-semialdehyde + NAD(+) + H2O = L-glutamate + NADH + 2 H(+). Its pathway is amino-acid degradation; L-proline degradation into L-glutamate; L-glutamate from L-proline: step 2/2. The protein is 1-pyrroline-5-carboxylate dehydrogenase of Geobacillus thermodenitrificans (strain NG80-2).